Consider the following 376-residue polypeptide: Dual-specificity RNA methyltransferase RlmN (376 aa).

The Proton acceptor role is filled by Glu95. One can recognise a Radical SAM core domain in the interval 101-339 (EKERATLCVS…CIVRRPRGDD (239 aa)). Cysteines 108 and 344 form a disulfide. [4Fe-4S] cluster is bound by residues Cys115, Cys119, and Cys122. S-adenosyl-L-methionine-binding positions include 169 to 170 (GE), Ser201, 223 to 225 (SLH), and Asn301. Cys344 serves as the catalytic S-methylcysteine intermediate.

This sequence belongs to the radical SAM superfamily. RlmN family. It depends on [4Fe-4S] cluster as a cofactor.

Its subcellular location is the cytoplasm. It catalyses the reaction adenosine(2503) in 23S rRNA + 2 reduced [2Fe-2S]-[ferredoxin] + 2 S-adenosyl-L-methionine = 2-methyladenosine(2503) in 23S rRNA + 5'-deoxyadenosine + L-methionine + 2 oxidized [2Fe-2S]-[ferredoxin] + S-adenosyl-L-homocysteine. It carries out the reaction adenosine(37) in tRNA + 2 reduced [2Fe-2S]-[ferredoxin] + 2 S-adenosyl-L-methionine = 2-methyladenosine(37) in tRNA + 5'-deoxyadenosine + L-methionine + 2 oxidized [2Fe-2S]-[ferredoxin] + S-adenosyl-L-homocysteine. In terms of biological role, specifically methylates position 2 of adenine 2503 in 23S rRNA and position 2 of adenine 37 in tRNAs. m2A2503 modification seems to play a crucial role in the proofreading step occurring at the peptidyl transferase center and thus would serve to optimize ribosomal fidelity. The chain is Dual-specificity RNA methyltransferase RlmN from Pseudoalteromonas translucida (strain TAC 125).